The sequence spans 401 residues: Mitochondrial distribution and morphology protein 12 (401 aa).

An SMP-LTD domain is found at 1-401 (MSIDINWDTL…VYPSFWTFLV (401 aa)). Residues 70–88 (YEEDEDYPDNEDDDDDEAG) show a composition bias toward acidic residues. 2 disordered regions span residues 70 to 95 (YEED…NPRN) and 190 to 247 (SLTL…EKSP). Low complexity predominate over residues 195-205 (PQSHPDPSSRP). The span at 209-220 (HQHDDERRRSLA) shows a compositional bias: basic and acidic residues.

This sequence belongs to the MDM12 family. As to quaternary structure, component of the ER-mitochondria encounter structure (ERMES) or MDM complex, composed of MMM1, MDM10, MDM12 and MDM34. An MMM1 homodimer associates with one molecule of MDM12 on each side in a pairwise head-to-tail manner, and the SMP-LTD domains of MMM1 and MDM12 generate a continuous hydrophobic tunnel for phospholipid trafficking.

The protein resides in the mitochondrion outer membrane. Its subcellular location is the endoplasmic reticulum membrane. In terms of biological role, component of the ERMES/MDM complex, which serves as a molecular tether to connect the endoplasmic reticulum (ER) and mitochondria. Components of this complex are involved in the control of mitochondrial shape and protein biogenesis, and function in nonvesicular lipid trafficking between the ER and mitochondria. MDM12 is required for the interaction of the ER-resident membrane protein MMM1 and the outer mitochondrial membrane-resident beta-barrel protein MDM10. The MDM12-MMM1 subcomplex functions in the major beta-barrel assembly pathway that is responsible for biogenesis of all mitochondrial outer membrane beta-barrel proteins, and acts in a late step after the SAM complex. The MDM10-MDM12-MMM1 subcomplex further acts in the TOM40-specific pathway after the action of the MDM12-MMM1 complex. Essential for establishing and maintaining the structure of mitochondria and maintenance of mtDNA nucleoids. The protein is Mitochondrial distribution and morphology protein 12 of Phaeosphaeria nodorum (strain SN15 / ATCC MYA-4574 / FGSC 10173) (Glume blotch fungus).